We begin with the raw amino-acid sequence, 350 residues long: MTMGGTEKNVENKQYRLPREVKEALQAIASEWEDVIDSKALQVIPLKGAMTNEVFQIKWPTREKGPSRKVLVRIYGEGVEIFFDREDEIRTFEFMSKHGHGPLLLGRFGNGRIEEFLHARTLSACDLRDPEISGRIATRMKEFHGLEMPGAKKALLWDRLRNWLTACKRLASPEEAKSFRLDVMEMEINMLEKSLFDNDENIGFCHNDLQYGNIMMDEETKAITIIDYEYSCYNPVAYDIANHFCEMAADYHTETPHIMDYSKYPGVEERQRFLKTYMSYSDEKPSDTMVKKLLEDVEKYTLASHLIWGLWGIISEHVNEIDFDYMEYARQRFEQYWLTKPRLLAASEHK.

Positions 73, 210, and 227 each coordinate ATP.

Belongs to the choline/ethanolamine kinase family.

The enzyme catalyses choline + ATP = phosphocholine + ADP + H(+). Its pathway is phospholipid metabolism; phosphatidylcholine biosynthesis; phosphocholine from choline: step 1/1. In terms of biological role, involved in phospholipid biosynthesis. Catalyzes the first step in phosphatidylcholine biosynthesis. This Arabidopsis thaliana (Mouse-ear cress) protein is Probable choline kinase 2.